The chain runs to 1342 residues: DNA-directed RNA polymerase subunit beta (1342 aa).

The protein belongs to the RNA polymerase beta chain family. In terms of assembly, the RNAP catalytic core consists of 2 alpha, 1 beta, 1 beta' and 1 omega subunit. When a sigma factor is associated with the core the holoenzyme is formed, which can initiate transcription.

It carries out the reaction RNA(n) + a ribonucleoside 5'-triphosphate = RNA(n+1) + diphosphate. DNA-dependent RNA polymerase catalyzes the transcription of DNA into RNA using the four ribonucleoside triphosphates as substrates. This chain is DNA-directed RNA polymerase subunit beta, found in Photorhabdus laumondii subsp. laumondii (strain DSM 15139 / CIP 105565 / TT01) (Photorhabdus luminescens subsp. laumondii).